Reading from the N-terminus, the 275-residue chain is Dermonecrotic toxin SpeSicTox-betaIIA2ii (275 aa).

H5 is an active-site residue. Residues E25 and D27 each contribute to the Mg(2+) site. Catalysis depends on H41, which acts as the Nucleophile. Intrachain disulfides connect C45–C51 and C47–C190. D85 provides a ligand contact to Mg(2+).

The protein belongs to the arthropod phospholipase D family. Class II subfamily. Requires Mg(2+) as cofactor. Expressed by the venom gland.

It is found in the secreted. The enzyme catalyses an N-(acyl)-sphingosylphosphocholine = an N-(acyl)-sphingosyl-1,3-cyclic phosphate + choline. The catalysed reaction is an N-(acyl)-sphingosylphosphoethanolamine = an N-(acyl)-sphingosyl-1,3-cyclic phosphate + ethanolamine. It carries out the reaction a 1-acyl-sn-glycero-3-phosphocholine = a 1-acyl-sn-glycero-2,3-cyclic phosphate + choline. It catalyses the reaction a 1-acyl-sn-glycero-3-phosphoethanolamine = a 1-acyl-sn-glycero-2,3-cyclic phosphate + ethanolamine. Its function is as follows. Dermonecrotic toxins cleave the phosphodiester linkage between the phosphate and headgroup of certain phospholipids (sphingolipid and lysolipid substrates), forming an alcohol (often choline) and a cyclic phosphate. This toxin acts on sphingomyelin (SM). It may also act on ceramide phosphoethanolamine (CPE), lysophosphatidylcholine (LPC) and lysophosphatidylethanolamine (LPE), but not on lysophosphatidylserine (LPS), and lysophosphatidylglycerol (LPG). It acts by transphosphatidylation, releasing exclusively cyclic phosphate products as second products. Induces dermonecrosis, hemolysis, increased vascular permeability, edema, inflammatory response, and platelet aggregation. This Sicarius peruensis (Six-eyed sand spider) protein is Dermonecrotic toxin SpeSicTox-betaIIA2ii.